A 484-amino-acid chain; its full sequence is Trigger factor (484 aa).

In terms of domain architecture, PPIase FKBP-type spans 162 to 243 (GDFISIDLSA…VKSVKERELP (82 aa)). The disordered stretch occupies residues 427-484 (DGNTIDTSEFFGKPPENDVTDLLDDDADGDAGVDADGDTENSAEPADADSADTAQGAG). A compositionally biased stretch (acidic residues) spans 444–476 (DVTDLLDDDADGDAGVDADGDTENSAEPADADS).

This sequence belongs to the FKBP-type PPIase family. Tig subfamily.

It is found in the cytoplasm. The enzyme catalyses [protein]-peptidylproline (omega=180) = [protein]-peptidylproline (omega=0). Involved in protein export. Acts as a chaperone by maintaining the newly synthesized protein in an open conformation. Functions as a peptidyl-prolyl cis-trans isomerase. The protein is Trigger factor of Mycobacterium ulcerans (strain Agy99).